The chain runs to 267 residues: Palmitoyltransferase ZDHHC12 (267 aa).

Residues 1 to 9 (MAPWALLSP) lie on the Cytoplasmic side of the membrane. A helical membrane pass occupies residues 10 to 30 (GVLVRTGHTVLTWGITLVLFL). The Lumenal segment spans residues 31-43 (HDTELRQWEEQGE). A helical transmembrane segment spans residues 44 to 64 (LLLPLTFLLLVLGSLLLYLAV). Topologically, residues 65–140 (SLMDPGYVNV…ENCVGERNHP (76 aa)) are cytoplasmic. A DHHC domain is found at 97–147 (RRCRYCLVLQPLRARHCRECRRCVRRYDHHCPWMENCVGERNHPLFVVYLA). C127 serves as the catalytic S-palmitoyl cysteine intermediate. The chain crosses the membrane as a helical span at residues 141–161 (LFVVYLALQLVVLLWGLYLAW). The Lumenal segment spans residues 162–178 (SGLRFFQPWGQWLRSSG). A helical membrane pass occupies residues 179 to 199 (LLFATFLLLSLFSLVASLLLV). The Cytoplasmic portion of the chain corresponds to 200–267 (SHLYLVASNT…EEEEGSSPAV (68 aa)).

The protein belongs to the DHHC palmitoyltransferase family. In terms of tissue distribution, widely expressed.

The protein resides in the golgi apparatus membrane. Its subcellular location is the endoplasmic reticulum membrane. It catalyses the reaction L-cysteinyl-[protein] + hexadecanoyl-CoA = S-hexadecanoyl-L-cysteinyl-[protein] + CoA. In terms of biological role, palmitoyltransferase that catalyzes the addition of palmitate onto various protein substrates. Has a palmitoyltransferase activity toward gephyrin/GPHN, regulating its clustering at synapses and its function in gamma-aminobutyric acid receptor clustering. Thereby, indirectly regulates GABAergic synaptic transmission. Negatively regulates NLRP3-driven inflammation. Catalyzes NLRP3 palmitoylation, leading to its degradation via the chaperone-mediated autophagy (CMA) process. The polypeptide is Palmitoyltransferase ZDHHC12 (Homo sapiens (Human)).